A 39-amino-acid polypeptide reads, in one-letter code: Photosystem II reaction center protein J (39 aa).

A helical transmembrane segment spans residues 7-27 (IPLWVVAVIAGLGVIAVVGLF).

This sequence belongs to the PsbJ family. PSII is composed of 1 copy each of membrane proteins PsbA, PsbB, PsbC, PsbD, PsbE, PsbF, PsbH, PsbI, PsbJ, PsbK, PsbL, PsbM, PsbT, PsbX, PsbY, PsbZ, Psb30/Ycf12, peripheral proteins PsbO, CyanoQ (PsbQ), PsbU, PsbV and a large number of cofactors. It forms dimeric complexes.

It is found in the cellular thylakoid membrane. One of the components of the core complex of photosystem II (PSII). PSII is a light-driven water:plastoquinone oxidoreductase that uses light energy to abstract electrons from H(2)O, generating O(2) and a proton gradient subsequently used for ATP formation. It consists of a core antenna complex that captures photons, and an electron transfer chain that converts photonic excitation into a charge separation. This chain is Photosystem II reaction center protein J, found in Gloeothece citriformis (strain PCC 7424) (Cyanothece sp. (strain PCC 7424)).